We begin with the raw amino-acid sequence, 271 residues long: Protein-L-isoaspartate O-methyltransferase (271 aa).

Positions 1 to 15 (MRKPVTPPGNPPRPR) are enriched in pro residues. The interval 1-60 (MRKPVTPPGNPPRPRSPGYGSTSLAPGITAANSNTRISPPTLARPAPAAGAGGQGGNLGL) is disordered. The span at 39–49 (PPTLARPAPAA) shows a compositional bias: low complexity. Ser119 is an active-site residue.

This sequence belongs to the methyltransferase superfamily. L-isoaspartyl/D-aspartyl protein methyltransferase family.

Its subcellular location is the cytoplasm. It catalyses the reaction [protein]-L-isoaspartate + S-adenosyl-L-methionine = [protein]-L-isoaspartate alpha-methyl ester + S-adenosyl-L-homocysteine. In terms of biological role, catalyzes the methyl esterification of L-isoaspartyl residues in peptides and proteins that result from spontaneous decomposition of normal L-aspartyl and L-asparaginyl residues. It plays a role in the repair and/or degradation of damaged proteins. The protein is Protein-L-isoaspartate O-methyltransferase of Bordetella petrii (strain ATCC BAA-461 / DSM 12804 / CCUG 43448).